Reading from the N-terminus, the 270-residue chain is MSQLLRKPERAEISKGVTLVHDVTADNASLEYVSFKALDLSQGATYSETLENKECCIVVVTGKVHVTDHEVTFENIGTRESVFEKKPTDSVYVSNNQTFSIEAVTGARVALCYAPSKNQLPTKLIKAEDNGVEHRGKGNNQRMVHNILPDSDPSANSLLVVEVFTESGNWSSYPPHKHDRDLLPEESLLEETYYHEVNPKQGFVFQRVYTDDRSLDETMTVENENMVIVPKGYHPVGVPEGYASYYLNVMAGPKRIWKFFNDPAHEWIIE.

Belongs to the isomerase IolB family.

It catalyses the reaction 5-deoxy-D-glucuronate = 5-dehydro-2-deoxy-D-gluconate. Its pathway is polyol metabolism; myo-inositol degradation into acetyl-CoA; acetyl-CoA from myo-inositol: step 4/7. Its function is as follows. Involved in the isomerization of 5-deoxy-glucuronate (5DG) to 5-dehydro-2-deoxy-D-gluconate (DKG or 2-deoxy-5-keto-D-gluconate). This chain is 5-deoxy-glucuronate isomerase, found in Halalkalibacterium halodurans (strain ATCC BAA-125 / DSM 18197 / FERM 7344 / JCM 9153 / C-125) (Bacillus halodurans).